The sequence spans 409 residues: Lissencephaly-1 homolog (409 aa).

The region spanning 7 to 39 (RRERSNQAIADYLGSNGYTDALEAFRKEADMPN) is the LisH domain. Residues 54 to 81 (TSVIRLQKKVMELEAKLSEAEKEAIEGA) adopt a coiled-coil conformation. WD repeat units follow at residues 104–145 (GHRA…RTLK), 146–185 (GHTDSVQDLAFDSHGKLLASCSSDLSIKLWDFQQTFECVK), 189–228 (GHDHNVSSVSFVPAGDYLLSASRDKTIKMWEVATGYCVKT), 231–270 (GHREWVRMVRVNVDGSLMASCSNDHSVRVWQTNSKECKAE), 273–332 (EHEN…CLFT), 335–374 (GHDNWVRGIVFHPGGKYMLSASDDKTLRIWDLRNKRCMKT), and 377–409 (AHSHFCTSLDMHKSHPYVISGSVDTTVKVWECR).

It belongs to the WD repeat LIS1/nudF family.

The protein localises to the cytoplasm. The protein resides in the cytoskeleton. It localises to the microtubule organizing center. Its subcellular location is the centrosome. In terms of biological role, positively regulates the activity of the minus-end directed microtubule motor protein dynein. May enhance dynein-mediated microtubule sliding by targeting dynein to the microtubule plus end. Required for several dynein- and microtubule-dependent processes. In Aedes aegypti (Yellowfever mosquito), this protein is Lissencephaly-1 homolog.